Here is a 542-residue protein sequence, read N- to C-terminus: Organic anion transporter 3 (542 aa).

Residues 1-9 (MTFSEILDR) are Cytoplasmic-facing. Residue Ser4 is modified to Phosphoserine. The chain crosses the membrane as a helical span at residues 10-30 (VGSMGPFQFLHVALLGFPILG). Over 31-123 (MANHNLLQIF…LVCSSNKLKE (93 aa)) the chain is Extracellular. Asn86 carries an N-linked (GlcNAc...) asparagine glycan. The helical transmembrane segment at 124–144 (MAQSIFMAGILIGGLVLGDLS) threads the bilayer. At 145 to 150 (DRFGRK) the chain is on the cytoplasmic side. The helical transmembrane segment at 151–171 (PILTCCYLLLAASGSSTAFSP) threads the bilayer. Residues 172 to 176 (TLPIY) are Extracellular-facing. Residues 177–197 (MVFRFLCGFSISGISLSTVIL) traverse the membrane as a helical segment. Residues 198–212 (NVEWVPTKMRAITST) lie on the Cytoplasmic side of the membrane. The chain crosses the membrane as a helical span at residues 213 to 233 (AIGYCYTIGQFILPGLAYAIP). Residues 234-236 (QWR) are Extracellular-facing. A helical membrane pass occupies residues 237–257 (WLQLTVSVPYFIFSLLSWWIP). Topologically, residues 258 to 327 (ESIRWLVLAG…FRTPILRRVT (70 aa)) are cytoplasmic. Residues 328 to 348 (LCLSLAWFATGFAYYSLAMGV) form a helical membrane-spanning segment. Topologically, residues 349-354 (EEFGVN) are extracellular. Residues 355–375 (IYILQIIFGGVDIPAKFITIL) form a helical membrane-spanning segment. Residues 376–389 (SLSYLGRHITQGAA) lie on the Cytoplasmic side of the membrane. Residues 390–410 (LILAGAAILSLIFVPMDMSLL) form a helical membrane-spanning segment. Residue Arg411 is a topological domain, extracellular. Residues 412 to 432 (TILAVFGKGCLSGSFSCLFLY) traverse the membrane as a helical segment. At 433–471 (TSELFPTVIRQTGMGISNVWARVGSMISPLVKITGEIQP) the chain is on the cytoplasmic side. A helical transmembrane segment spans residues 472–492 (FIPNIIYGTVALLGGSAALFL). Residues 493–542 (PETLNQPLPETLEDMENWFLQSKKLKQEPEAEKASQRIPLQPSGPGVDRS) are Extracellular-facing. Positions 518–527 (KQEPEAEKAS) are enriched in basic and acidic residues. A disordered region spans residues 518 to 542 (KQEPEAEKASQRIPLQPSGPGVDRS).

Belongs to the major facilitator (TC 2.A.1) superfamily. Organic cation transporter (TC 2.A.1.19) family.

It is found in the basolateral cell membrane. It catalyses the reaction estrone 3-sulfate(out) + glutarate(in) = estrone 3-sulfate(in) + glutarate(out). The enzyme catalyses estrone 3-sulfate(in) + 2-oxoglutarate(out) = estrone 3-sulfate(out) + 2-oxoglutarate(in). It carries out the reaction glutarate(in) + 2-oxoglutarate(out) = glutarate(out) + 2-oxoglutarate(in). The catalysed reaction is urate(in) + 2-oxoglutarate(out) = urate(out) + 2-oxoglutarate(in). It catalyses the reaction taurocholate(out) + glutarate(in) = taurocholate(in) + glutarate(out). The enzyme catalyses dehydroepiandrosterone 3-sulfate(out) + glutarate(in) = dehydroepiandrosterone 3-sulfate(in) + glutarate(out). It carries out the reaction prostaglandin F2alpha(out) + glutarate(in) = prostaglandin F2alpha(in) + glutarate(out). The catalysed reaction is prostaglandin F2alpha(out) + 2-oxoglutarate(in) = prostaglandin F2alpha(in) + 2-oxoglutarate(out). It catalyses the reaction (R)-carnitine(out) + 2-oxoglutarate(in) = (R)-carnitine(in) + 2-oxoglutarate(out). The enzyme catalyses glutarate(in) + (R)-carnitine(out) = glutarate(out) + (R)-carnitine(in). It carries out the reaction prostaglandin E2(out) + 2-oxoglutarate(in) = prostaglandin E2(in) + 2-oxoglutarate(out). The catalysed reaction is prostaglandin E2(out) + glutarate(in) = prostaglandin E2(in) + glutarate(out). It catalyses the reaction urate(in) + glutarate(out) = urate(out) + glutarate(in). The enzyme catalyses taurocholate(out) + 2-oxoglutarate(in) = taurocholate(in) + 2-oxoglutarate(out). It carries out the reaction dehydroepiandrosterone 3-sulfate(out) + 2-oxoglutarate(in) = dehydroepiandrosterone 3-sulfate(in) + 2-oxoglutarate(out). The catalysed reaction is kynurenate(out) + a dicarboxylate(in) = kynurenate(in) + a dicarboxylate(out). It catalyses the reaction (indol-3-yl)acetate(out) + a dicarboxylate(in) = (indol-3-yl)acetate(in) + a dicarboxylate(out). The enzyme catalyses indoxyl sulfate(out) + a dicarboxylate(in) = indoxyl sulfate(in) + a dicarboxylate(out). It carries out the reaction N-benzoylglycine(out) + a dicarboxylate(in) = N-benzoylglycine(in) + a dicarboxylate(out). The catalysed reaction is 3-carboxy-4-methyl-5-propyl-2-furanpropanoate(out) + a dicarboxylate(in) = 3-carboxy-4-methyl-5-propyl-2-furanpropanoate(in) + a dicarboxylate(out). It catalyses the reaction (6R)-L-erythro-5,6,7,8-tetrahydrobiopterin(out) + a dicarboxylate(in) = (6R)-L-erythro-5,6,7,8-tetrahydrobiopterin(in) + a dicarboxylate(out). The enzyme catalyses L-erythro-7,8-dihydrobiopterin(out) + a dicarboxylate(in) = L-erythro-7,8-dihydrobiopterin(in) + a dicarboxylate(out). It carries out the reaction L-sepiapterin(out) + a dicarboxylate(in) = L-sepiapterin(in) + a dicarboxylate(out). Functionally, functions as an organic anion/dicarboxylate exchanger that couples organic anion uptake indirectly to the sodium gradient. Transports organic anions such as estrone 3-sulfate (E1S) and urate in exchange for dicarboxylates such as glutarate or ketoglutarate (2-oxoglutarate). Plays an important role in the excretion of endogenous and exogenous organic anions, especially from the kidney and the brain. E1S transport is pH- and chloride-dependent and may also involve E1S/cGMP exchange. Responsible for the transport of prostaglandin E2 (PGE2) and prostaglandin F2(alpha) (PGF2(alpha)) in the basolateral side of the renal tubule. Involved in the transport of neuroactive tryptophan metabolites kynurenate and xanthurenate. Functions as a biopterin transporters involved in the uptake and the secretion of coenzymes tetrahydrobiopterin (BH4), dihydrobiopterin (BH2) and sepiapterin to urine, thereby determining baseline levels of blood biopterins. May be involved in the basolateral transport of steviol, a metabolite of the popular sugar substitute stevioside. May participate in the detoxification/ renal excretion of drugs and xenobiotics, such as the histamine H(2)-receptor antagonists fexofenadine and cimetidine, the antibiotic benzylpenicillin (PCG), the anionic herbicide 2,4-dichloro-phenoxyacetate (2,4-D), the diagnostic agent p-aminohippurate (PAH), the antiviral acyclovir (ACV), and the mycotoxin ochratoxin (OTA), by transporting these exogenous organic anions across the cell membrane in exchange for dicarboxylates such as 2-oxoglutarate. Contributes to the renal uptake of potent uremic toxins (indoxyl sulfate (IS), indole acetate (IA), hippurate/N-benzoylglycine (HA) and 3-carboxy-4-methyl-5-propyl-2-furanpropionate (CMPF)), pravastatin, PCG, E1S and dehydroepiandrosterone sulfate (DHEAS), and is partly involved in the renal uptake of temocaprilat (an angiotensin-converting enzyme (ACE) inhibitor). May contribute to the release of cortisol in the adrenals. Involved in one of the detoxification systems on the choroid plexus (CP), removes substrates such as E1S or taurocholate (TC), PCG, 2,4-D and PAH, from the cerebrospinal fluid (CSF) to the blood for eventual excretion in urine and bile. Also contributes to the uptake of several other organic compounds such as the prostanoids prostaglandin E(2) and prostaglandin F(2-alpha), L-carnitine, and the therapeutic drugs allopurinol, 6-mercaptopurine (6-MP) and 5-fluorouracil (5-FU). Mediates the transport of PAH, PCG, and the statins pravastatin and pitavastatin, from the cerebrum into the blood circulation across the blood-brain barrier (BBB). In summary, plays a role in the efflux of drugs and xenobiotics, helping reduce their undesired toxicological effects on the body. The protein is Organic anion transporter 3 (SLC22A8) of Oryctolagus cuniculus (Rabbit).